The primary structure comprises 616 residues: 2-isopropylmalate synthase (616 aa).

The tract at residues 1–34 (MSPNDAFISAPAKIETPVGPRNEGQPAWNKQRGS) is disordered. In terms of domain architecture, Pyruvate carboxyltransferase spans 67–341 (PQWCAVDLRD…DPQLDFTDIR (275 aa)). Mg(2+) is bound by residues Asp-76, His-280, His-282, and Asn-316. Residues 490-616 (RTAPVEQIAL…NHEAVLAGGV (127 aa)) are regulatory domain.

This sequence belongs to the alpha-IPM synthase/homocitrate synthase family. LeuA type 2 subfamily. Homodimer. Mg(2+) is required as a cofactor.

The protein localises to the cytoplasm. The catalysed reaction is 3-methyl-2-oxobutanoate + acetyl-CoA + H2O = (2S)-2-isopropylmalate + CoA + H(+). The protein operates within amino-acid biosynthesis; L-leucine biosynthesis; L-leucine from 3-methyl-2-oxobutanoate: step 1/4. Functionally, catalyzes the condensation of the acetyl group of acetyl-CoA with 3-methyl-2-oxobutanoate (2-ketoisovalerate) to form 3-carboxy-3-hydroxy-4-methylpentanoate (2-isopropylmalate). The protein is 2-isopropylmalate synthase of Corynebacterium glutamicum (strain R).